The following is a 560-amino-acid chain: Membrane protein insertase YidC (560 aa).

Transmembrane regions (helical) follow at residues 5-25 (IINL…WQYF), 334-354 (AIDF…MNFF), 357-377 (YVGN…LLMF), 431-451 (LPIL…YVTI), 476-496 (LFGL…WPIL), and 522-542 (FMPL…LIYW).

Belongs to the OXA1/ALB3/YidC family. Type 1 subfamily. As to quaternary structure, interacts with the Sec translocase complex via SecD. Specifically interacts with transmembrane segments of nascent integral membrane proteins during membrane integration.

The protein localises to the cell inner membrane. Functionally, required for the insertion and/or proper folding and/or complex formation of integral membrane proteins into the membrane. Involved in integration of membrane proteins that insert both dependently and independently of the Sec translocase complex, as well as at least some lipoproteins. Aids folding of multispanning membrane proteins. The sequence is that of Membrane protein insertase YidC from Rickettsia rickettsii (strain Iowa).